The chain runs to 329 residues: Malate dehydrogenase (329 aa).

12–18 (GAAGQIG) serves as a coordination point for NAD(+). Residues Arg93 and Arg99 each contribute to the substrate site. NAD(+)-binding positions include Asn106, Gln113, and 130-132 (TGN). Positions 132 and 163 each coordinate substrate. His188 (proton acceptor) is an active-site residue.

It belongs to the LDH/MDH superfamily. MDH type 2 family.

The catalysed reaction is (S)-malate + NAD(+) = oxaloacetate + NADH + H(+). In terms of biological role, catalyzes the reversible oxidation of malate to oxaloacetate. The protein is Malate dehydrogenase of Mycobacterium ulcerans (strain Agy99).